The primary structure comprises 503 residues: Rhomboid-type serine protease 2 (503 aa).

Residues 1-11 show a composition bias toward polar residues; sequence MAAQSYYNGAY. The interval 1–66 is disordered; it reads MAAQSYYNGA…SLRYSQQSIG (66 aa). Residues 1–136 are Cytoplasmic-facing; it reads MAAQSYYNGA…QKKKGFFQKK (136 aa). A helical transmembrane segment spans residues 137-157; sequence IAYVTYILTIAQIIVFIVELV. Residues 158 to 253 lie on the Extracellular side of the membrane; sequence KMGQLTGSPI…DKPAPDQWFR (96 aa). A helical membrane pass occupies residues 254 to 274; the sequence is FIIPMFLHSGFVHIGFNLLVQ. Over 275-283 the chain is Cytoplasmic; sequence MTMGADMER. Residues 284–304 form a helical membrane-spanning segment; it reads MIGWWRYGLVYLSSGIWGFVL. At 305–316 the chain is on the extracellular side; sequence GGNYAGQGEASC. Residues 317–337 form a helical membrane-spanning segment; the sequence is GCSGALFGILALFVLDLLYGW. Ser319 serves as the catalytic Nucleophile. The Cytoplasmic portion of the chain corresponds to 338-342; sequence NDRQN. A helical transmembrane segment spans residues 343–363; the sequence is PWVELIIMVLGIAVSFVLGLL. Topologically, residues 364-365 are extracellular; sequence PG. A helical transmembrane segment spans residues 366-386; it reads LDNFSHLGGFTMGLALGLCVM. His371 is an active-site residue. Residues 387–449 lie on the Cytoplasmic side of the membrane; that stretch reads RSPNALRERI…FAGRKPLWWA (63 aa). Residues 450–470 form a helical membrane-spanning segment; it reads WWLVRLGALVAVLIGFILLIV. Residues 471–503 lie on the Extracellular side of the membrane; sequence NFYKYPSSNCSWCYRFSCLPVNGWCDQGNLFSR.

This sequence belongs to the peptidase S54 family.

It is found in the membrane. It catalyses the reaction Cleaves type-1 transmembrane domains using a catalytic dyad composed of serine and histidine that are contributed by different transmembrane domains.. Its function is as follows. Probable rhomboid-type serine protease that catalyzes intramembrane proteolysis. This Emericella nidulans (strain FGSC A4 / ATCC 38163 / CBS 112.46 / NRRL 194 / M139) (Aspergillus nidulans) protein is Rhomboid-type serine protease 2.